A 47-amino-acid polypeptide reads, in one-letter code: Large ribosomal subunit protein bL27c-2 (47 aa).

This sequence belongs to the bacterial ribosomal protein bL27 family.

It is found in the plastid. It localises to the chloroplast. In Cyanidium caldarium (Red alga), this protein is Large ribosomal subunit protein bL27c-2.